We begin with the raw amino-acid sequence, 334 residues long: MFRRERSIPLRGSAAALSNNLSVLQLPARDLTHFGVVHGPSAQLLSAAPEGVPLAQRQLHVKEGAGVSPPLITQVHWCVLPFRVLLVLTSHRGIQMYESDGSVMVYWHALDSGDASSVQAMFARGIAASVHFICVGTWSGRILVFDIPAKGPNIVLNEELAGHQTPITDIATERAQGQDGVADMVTADDSGVLCVWRSGPEFTLLTRIAGFGVPCPSVQLWQGIVAAGYGNGQVRLYDAGTGALHIQISAHARTISALDLAPEVGKLLSAAEDTFVHIWKLNRNPESGSIEVEHCHGECISDTQVCGARFCDPGGSSFAVTGYDLAEILRFGSV.

WD repeat units lie at residues G162–T206, I208–Q247, and A250–S289.

Homodimer and homotrimer; forms tight forms of dimers and trimers. Interacts with IZUMO1 and IZUMO1R/JUNO. In terms of processing, cross-linked to tightly form both dimers and trimers by TGM2. Cross-linking enhances the activation of EGF receptor-mediated signaling pathway. Cross-linking is inhibited by EGF. Ubiquitinated. EGF increases ubiquitination. As to expression, widely expressed in the ovary and testis (at protein level).

The protein localises to the vesicle. It is found in the cytoplasm. The protein resides in the cell membrane. In terms of biological role, plays a role in the adhesion and fusion of the sperm-oocyte membrane through its interactions with IZUMO1 and IZUMO1R/JUNO. When cross-linked to form dimers and trimers, it has a regulatory effect on ERK signaling pathway activity in response to EGF stimulation. Colocalizes with the EGF receptor in WDR54-specific vesicle where it sustains the internalization and controls the degradation of the EGF receptor after EGF stimulation. In Rattus norvegicus (Rat), this protein is WD repeat domain 54 (Wdr54).